The chain runs to 234 residues: Purine nucleoside phosphorylase DeoD-type (234 aa).

H4 lines the a purine D-ribonucleoside pocket. Phosphate is bound by residues G20, R24, R43, and 87–90 (RIGS). A purine D-ribonucleoside contacts are provided by residues E162, 179–181 (EME), and 203–204 (SD). Catalysis depends on D204, which acts as the Proton donor.

This sequence belongs to the PNP/UDP phosphorylase family. As to quaternary structure, homohexamer; trimer of homodimers.

It carries out the reaction a purine D-ribonucleoside + phosphate = a purine nucleobase + alpha-D-ribose 1-phosphate. The enzyme catalyses a purine 2'-deoxy-D-ribonucleoside + phosphate = a purine nucleobase + 2-deoxy-alpha-D-ribose 1-phosphate. Its function is as follows. Catalyzes the reversible phosphorolytic breakdown of the N-glycosidic bond in the beta-(deoxy)ribonucleoside molecules, with the formation of the corresponding free purine bases and pentose-1-phosphate. This is Purine nucleoside phosphorylase DeoD-type from Roseobacter denitrificans (strain ATCC 33942 / OCh 114) (Erythrobacter sp. (strain OCh 114)).